A 226-amino-acid chain; its full sequence is Lipoprotein-releasing system ATP-binding protein LolD (226 aa).

In terms of domain architecture, ABC transporter spans 5-225 (LELVEIERHF…TLKEKKIVEL (221 aa)). ATP is bound at residue 41-48 (APSGAGKS).

This sequence belongs to the ABC transporter superfamily. Lipoprotein translocase (TC 3.A.1.125) family. As to quaternary structure, the complex is composed of two ATP-binding proteins (LolD) and two transmembrane proteins (LolC and LolE).

The protein resides in the cell inner membrane. Its function is as follows. Part of the ABC transporter complex LolCDE involved in the translocation of mature outer membrane-directed lipoproteins, from the inner membrane to the periplasmic chaperone, LolA. Responsible for the formation of the LolA-lipoprotein complex in an ATP-dependent manner. This is Lipoprotein-releasing system ATP-binding protein LolD from Bartonella quintana (strain Toulouse) (Rochalimaea quintana).